The following is a 314-amino-acid chain: Taste receptor type 2 member 42 (314 aa).

The Extracellular segment spans residues 1–7 (MATELDK). A helical transmembrane segment spans residues 8 to 28 (IFLILEIAEFIIGMLGNVFIG). The Cytoplasmic portion of the chain corresponds to 29–50 (LVNCSEGIKNQKVFSADFILTC). Residues 51 to 71 (LAISTIGQLFVILFDSFLVGL) form a helical membrane-spanning segment. Over 72–101 (ASHLYTTYRLGKPVIMLWHMTNHLTTWLAT) the chain is Extracellular. Residues 102-122 (CLSIFYFFKIAHFPHSLFLWL) form a helical membrane-spanning segment. Over 123–127 (RWRMN) the chain is Cytoplasmic. Residues 128–148 (GMIVMLLILSLFLLIFNSLVL) traverse the membrane as a helical segment. At 149–187 (EIFIDISLNIIDKSNLTLYLDESKTVYDKLSILKTLLSL) the chain is on the extracellular side. N163 carries N-linked (GlcNAc...) asparagine glycosylation. A helical transmembrane segment spans residues 188–208 (TSFIPFSLSLTSLLFLFLSLV). Over 209–238 (RHTRNLKLSSLGSRDSSTEAHRRAMKMVMS) the chain is Cytoplasmic. Residues 239–259 (FLFLFIVHFFSLQVANWIFFM) form a helical membrane-spanning segment. Over 260–265 (LWNNKY) the chain is Extracellular. Residues 266–286 (IKFAMLALNAFPSCHSFILIL) traverse the membrane as a helical segment. Residues 287-314 (GNSKLRQTAVRLLWHLRNYTKTPNPLPL) lie on the Cytoplasmic side of the membrane.

Belongs to the G-protein coupled receptor T2R family.

The protein localises to the membrane. Receptor that may play a role in the perception of bitterness and is gustducin-linked. May play a role in sensing the chemical composition of the gastrointestinal content. The activity of this receptor may stimulate alpha gustducin, mediate PLC-beta-2 activation and lead to the gating of TRPM5. This is Taste receptor type 2 member 42 (TAS2R42) from Pan troglodytes (Chimpanzee).